Reading from the N-terminus, the 167-residue chain is Biogenesis of lysosome-related organelles complex 1 subunit 6 (167 aa).

Polar residues predominate over residues 1-11 (MLKSSNINSVL). A disordered region spans residues 1-38 (MLKSSNINSVLNELPNDPARDSTAQSSHNGKPKQDAET). Residues 102–160 (ARLNDMMSDVKRYKDKLTKIKKEMQGVYQRTKELKKRAANVAACKQRDYQRKLERLQHE) adopt a coiled-coil conformation.

This sequence belongs to the BLOC1S6 family. Component of the biogenesis of lysosome-related organelles complex-1 (BLOC-1) composed of Blos1, Blos2, Blos3, Blos4, Dysb, Muted, Pldn and Snapin. Interacts with Blos1, Blos4 and Dysb.

The protein localises to the synapse. It is found in the cytoplasm. Its subcellular location is the cytoskeleton. It localises to the myofibril. The protein resides in the sarcomere. The protein localises to the z line. In terms of biological role, component of the biogenesis of lysosome-related organelles complex-1 (BLOC-1) involved in pigment granule biogenesis and membrane trafficking in synapses. In response to high synaptic activity at neuromuscular junctions, plays a key role in promoting efficient synaptic vesicle recycling and re-formation through early endosomes. The chain is Biogenesis of lysosome-related organelles complex 1 subunit 6 from Drosophila melanogaster (Fruit fly).